The following is a 668-amino-acid chain: UvrABC system protein B (668 aa).

A Helicase ATP-binding domain is found at 36-423; it reads DNIKGGEKAQ…TETVVEQIIR (388 aa). 49 to 56 contributes to the ATP binding site; it reads GATGTGKT. The Beta-hairpin motif lies at 102-125; it reads YYDYYQPEAYVPSSDTYIEKDSSI. Positions 440 to 606 constitute a Helicase C-terminal domain; the sequence is QMDDLLGEIN…TIKKEIRDLI (167 aa). The region spanning 632–667 is the UVR domain; that stretch reads QEAIKKLQKQMHEAAELLDFELAAQIRDMVLELKSM.

It belongs to the UvrB family. Forms a heterotetramer with UvrA during the search for lesions. Interacts with UvrC in an incision complex.

The protein localises to the cytoplasm. The UvrABC repair system catalyzes the recognition and processing of DNA lesions. A damage recognition complex composed of 2 UvrA and 2 UvrB subunits scans DNA for abnormalities. Upon binding of the UvrA(2)B(2) complex to a putative damaged site, the DNA wraps around one UvrB monomer. DNA wrap is dependent on ATP binding by UvrB and probably causes local melting of the DNA helix, facilitating insertion of UvrB beta-hairpin between the DNA strands. Then UvrB probes one DNA strand for the presence of a lesion. If a lesion is found the UvrA subunits dissociate and the UvrB-DNA preincision complex is formed. This complex is subsequently bound by UvrC and the second UvrB is released. If no lesion is found, the DNA wraps around the other UvrB subunit that will check the other stand for damage. This is UvrABC system protein B from Streptococcus thermophilus (strain CNRZ 1066).